A 446-amino-acid polypeptide reads, in one-letter code: Probable beta-1,4-xylosyltransferase IRX9L (446 aa).

Positions 1 to 26 (MSRRNAGAMQREGSVKDWEEFDPSPS) are disordered. Residues 1 to 85 (MSRRNAGAMQ…SRSKGMSLKR (85 aa)) lie on the Cytoplasmic side of the membrane. Residues 86-106 (AMLQLLVCFMVGIFIGFTPPF) traverse the membrane as a helical; Signal-anchor for type II membrane protein segment. Over 107-446 (SVDLPGKIAS…RNLDAVVPIT (340 aa)) the chain is Lumenal. N-linked (GlcNAc...) asparagine glycosylation is found at asparagine 185, asparagine 258, asparagine 361, and asparagine 411.

The protein belongs to the glycosyltransferase 43 family.

The protein localises to the golgi apparatus membrane. In terms of biological role, probable beta-1,4-xylosyltransferase involved in xylan biosynthesis in cell walls. This is Probable beta-1,4-xylosyltransferase IRX9L from Oryza sativa subsp. japonica (Rice).